The following is a 223-amino-acid chain: N-terminal Xaa-Pro-Lys N-methyltransferase 1 (223 aa).

An N-acetylmethionine modification is found at Met1. Thr2 is modified (N-acetylthreonine; in N-terminal Xaa-Pro-Lys N-methyltransferase 1, N-terminally processed). Residues Gly69, Arg74, 91 to 93 (DVT), 119 to 120 (LQ), and Gln135 contribute to the S-adenosyl-L-methionine site.

It belongs to the methyltransferase superfamily. NTM1 family.

It is found in the nucleus. The catalysed reaction is N-terminal L-alanyl-L-prolyl-L-lysyl-[protein] + 3 S-adenosyl-L-methionine = N-terminal N,N,N-trimethyl-L-alanyl-L-prolyl-L-lysyl-[protein] + 3 S-adenosyl-L-homocysteine + 3 H(+). It carries out the reaction N-terminal L-seryl-L-prolyl-L-lysyl-[protein] + 3 S-adenosyl-L-methionine = N-terminal N,N,N-trimethyl-L-seryl-L-prolyl-L-lysyl-[protein] + 3 S-adenosyl-L-homocysteine + 3 H(+). It catalyses the reaction N-terminal L-prolyl-L-prolyl-L-lysyl-[protein] + 2 S-adenosyl-L-methionine = N-terminal N,N-dimethyl-L-prolyl-L-prolyl-L-lysyl-[protein] + 2 S-adenosyl-L-homocysteine + 2 H(+). Its function is as follows. Distributive alpha-N-methyltransferase that methylates the N-terminus of target proteins containing the N-terminal motif [Ala/Gly/Pro/Ser]-Pro-Lys when the initiator Met is cleaved. Specifically catalyzes mono-, di- or tri-methylation of the exposed alpha-amino group of the Ala, Gly or Ser residue in the [Ala/Gly/Ser]-Pro-Lys motif and mono- or di-methylation of Pro in the Pro-Pro-Lys motif. Some of the substrates may be primed by NTMT2-mediated monomethylation. Catalyzes the trimethylation of the N-terminal Gly in CENPA (after removal of Met-1). Responsible for the N-terminal methylation of KLHL31, MYL2, MYL3, RB1, RCC1, RPL23A and SET. Required during mitosis for normal bipolar spindle formation and chromosome segregation via its action on RCC1. This chain is N-terminal Xaa-Pro-Lys N-methyltransferase 1 (NTMT1), found in Bos taurus (Bovine).